The sequence spans 417 residues: UDP-N-acetylglucosamine 1-carboxyvinyltransferase (417 aa).

Residue 22–23 (KN) coordinates phosphoenolpyruvate. Position 92 (Arg-92) interacts with UDP-N-acetyl-alpha-D-glucosamine. Catalysis depends on Cys-116, which acts as the Proton donor. A 2-(S-cysteinyl)pyruvic acid O-phosphothioketal modification is found at Cys-116. 2 residues coordinate UDP-N-acetyl-alpha-D-glucosamine: Asp-304 and Ile-326.

Belongs to the EPSP synthase family. MurA subfamily.

It localises to the cytoplasm. The catalysed reaction is phosphoenolpyruvate + UDP-N-acetyl-alpha-D-glucosamine = UDP-N-acetyl-3-O-(1-carboxyvinyl)-alpha-D-glucosamine + phosphate. The protein operates within cell wall biogenesis; peptidoglycan biosynthesis. Functionally, cell wall formation. Adds enolpyruvyl to UDP-N-acetylglucosamine. This chain is UDP-N-acetylglucosamine 1-carboxyvinyltransferase, found in Desulforapulum autotrophicum (strain ATCC 43914 / DSM 3382 / VKM B-1955 / HRM2) (Desulfobacterium autotrophicum).